A 241-amino-acid polypeptide reads, in one-letter code: Large ribosomal subunit protein uL30 (241 aa).

Positions 1–25 (MASTLKPETLVKKSKAQQKTAEERA) are disordered.

It belongs to the universal ribosomal protein uL30 family.

The polypeptide is Large ribosomal subunit protein uL30 (RPL7) (Debaryomyces hansenii (strain ATCC 36239 / CBS 767 / BCRC 21394 / JCM 1990 / NBRC 0083 / IGC 2968) (Yeast)).